A 376-amino-acid chain; its full sequence is Lipid-A-disaccharide synthase (376 aa).

It belongs to the LpxB family.

The enzyme catalyses a lipid X + a UDP-2-N,3-O-bis[(3R)-3-hydroxyacyl]-alpha-D-glucosamine = a lipid A disaccharide + UDP + H(+). It participates in bacterial outer membrane biogenesis; LPS lipid A biosynthesis. In terms of biological role, condensation of UDP-2,3-diacylglucosamine and 2,3-diacylglucosamine-1-phosphate to form lipid A disaccharide, a precursor of lipid A, a phosphorylated glycolipid that anchors the lipopolysaccharide to the outer membrane of the cell. This is Lipid-A-disaccharide synthase from Coxiella burnetii (strain Dugway 5J108-111).